A 140-amino-acid chain; its full sequence is Putative pre-16S rRNA nuclease (140 aa).

It belongs to the YqgF nuclease family.

Its subcellular location is the cytoplasm. Could be a nuclease involved in processing of the 5'-end of pre-16S rRNA. The protein is Putative pre-16S rRNA nuclease of Actinobacillus succinogenes (strain ATCC 55618 / DSM 22257 / CCUG 43843 / 130Z).